Consider the following 199-residue polypeptide: uncharacterized protein (199 aa).

The disordered stretch occupies residues 1–30; it reads MEDAAAPGRTEGVLERQGAPPAAGQGGALV. Residues 71 to 101 are a coiled coil; it reads RANATNKLTVIAEQIQHLQEQARKVLEDAHR.

This is an uncharacterized protein from Homo sapiens (Human).